Reading from the N-terminus, the 187-residue chain is MSGGREIALLGGSFNPPHVAHLMAAWWALATQGVSEVWLLPTFRHPFGKDLAPFEDRLEMCRLAARALRGVHVCGAEAELAADPLVGKTARTLEHLAAKHPDQRFALIVGADILAETAKWYRWDRVQALARIIVVGRQGHPPVPGAPDLPAISSTEIRARLARGEDVRGLVPEKVLRYVEEKGLYRG.

This sequence belongs to the NadD family.

It carries out the reaction nicotinate beta-D-ribonucleotide + ATP + H(+) = deamido-NAD(+) + diphosphate. Its pathway is cofactor biosynthesis; NAD(+) biosynthesis; deamido-NAD(+) from nicotinate D-ribonucleotide: step 1/1. Its function is as follows. Catalyzes the reversible adenylation of nicotinate mononucleotide (NaMN) to nicotinic acid adenine dinucleotide (NaAD). In Anaeromyxobacter dehalogenans (strain 2CP-1 / ATCC BAA-258), this protein is Probable nicotinate-nucleotide adenylyltransferase.